The sequence spans 567 residues: Dihydroxy-acid dehydratase (567 aa).

C57 contributes to the [2Fe-2S] cluster binding site. D89 contacts Mg(2+). C130 serves as a coordination point for [2Fe-2S] cluster. Mg(2+) contacts are provided by D131 and K132. At K132 the chain carries N6-carboxylysine. C202 contributes to the [2Fe-2S] cluster binding site. Residue E453 coordinates Mg(2+). Catalysis depends on S479, which acts as the Proton acceptor.

The protein belongs to the IlvD/Edd family. In terms of assembly, homodimer. [2Fe-2S] cluster is required as a cofactor. Mg(2+) serves as cofactor.

The enzyme catalyses (2R)-2,3-dihydroxy-3-methylbutanoate = 3-methyl-2-oxobutanoate + H2O. It catalyses the reaction (2R,3R)-2,3-dihydroxy-3-methylpentanoate = (S)-3-methyl-2-oxopentanoate + H2O. Its pathway is amino-acid biosynthesis; L-isoleucine biosynthesis; L-isoleucine from 2-oxobutanoate: step 3/4. The protein operates within amino-acid biosynthesis; L-valine biosynthesis; L-valine from pyruvate: step 3/4. In terms of biological role, functions in the biosynthesis of branched-chain amino acids. Catalyzes the dehydration of (2R,3R)-2,3-dihydroxy-3-methylpentanoate (2,3-dihydroxy-3-methylvalerate) into 2-oxo-3-methylpentanoate (2-oxo-3-methylvalerate) and of (2R)-2,3-dihydroxy-3-methylbutanoate (2,3-dihydroxyisovalerate) into 2-oxo-3-methylbutanoate (2-oxoisovalerate), the penultimate precursor to L-isoleucine and L-valine, respectively. The chain is Dihydroxy-acid dehydratase from Nocardioides sp. (strain ATCC BAA-499 / JS614).